Consider the following 268-residue polypeptide: GTP cyclohydrolase FolE2 (268 aa).

It belongs to the GTP cyclohydrolase IV family.

The enzyme catalyses GTP + H2O = 7,8-dihydroneopterin 3'-triphosphate + formate + H(+). It participates in cofactor biosynthesis; 7,8-dihydroneopterin triphosphate biosynthesis; 7,8-dihydroneopterin triphosphate from GTP: step 1/1. Converts GTP to 7,8-dihydroneopterin triphosphate. This is GTP cyclohydrolase FolE2 from Ralstonia nicotianae (strain ATCC BAA-1114 / GMI1000) (Ralstonia solanacearum).